A 309-amino-acid polypeptide reads, in one-letter code: Elongation factor Ts (309 aa).

The involved in Mg(2+) ion dislocation from EF-Tu stretch occupies residues 80 to 83 (TDFV).

The protein belongs to the EF-Ts family.

Its subcellular location is the cytoplasm. Its function is as follows. Associates with the EF-Tu.GDP complex and induces the exchange of GDP to GTP. It remains bound to the aminoacyl-tRNA.EF-Tu.GTP complex up to the GTP hydrolysis stage on the ribosome. This Rhodospirillum rubrum (strain ATCC 11170 / ATH 1.1.1 / DSM 467 / LMG 4362 / NCIMB 8255 / S1) protein is Elongation factor Ts.